A 165-amino-acid polypeptide reads, in one-letter code: Small ribosomal subunit protein uS5 (165 aa).

One can recognise an S5 DRBM domain in the interval 13–76 (LEEKVLVVNR…EAARKNLITI (64 aa)).

Belongs to the universal ribosomal protein uS5 family. Part of the 30S ribosomal subunit. Contacts proteins S4 and S8.

Functionally, with S4 and S12 plays an important role in translational accuracy. Located at the back of the 30S subunit body where it stabilizes the conformation of the head with respect to the body. The chain is Small ribosomal subunit protein uS5 from Chlamydia abortus (strain DSM 27085 / S26/3) (Chlamydophila abortus).